The sequence spans 443 residues: Probable glucomannan 4-beta-mannosyltransferase 11 (443 aa).

The active site involves Asp52. 2 residues coordinate substrate: Asp111 and Asp113. Asp205 is an active-site residue. Transmembrane regions (helical) follow at residues 284–304 (IIVH…SVFF), 321–341 (ITLF…FWVL), 400–420 (EMMV…FGKT), and 421–441 (VLYI…IGFI).

The protein belongs to the glycosyltransferase 2 family. Plant cellulose synthase-like A subfamily.

The protein resides in the golgi apparatus membrane. The enzyme catalyses GDP-mannose + (glucomannan)n = GDP + (glucomannan)n+1.. Functionally, probable mannan synthase which consists of a 4-beta-mannosyltransferase activity on mannan using GDP-mannose. The beta-1,4-mannan product is the backbone for galactomannan synthesis by galactomannan galactosyltransferase. Galactomannan is a noncellulosic polysaccharides of plant cell wall. This Arabidopsis thaliana (Mouse-ear cress) protein is Probable glucomannan 4-beta-mannosyltransferase 11.